Reading from the N-terminus, the 247-residue chain is E3 ubiquitin ligase TRIM40 (247 aa).

The RING-type zinc-finger motif lies at 12-55 (CPICLDPLKEAVSTDCRHLFCRMCLIRHMDKASVSGVLSCPVCR). Residues 64 to 105 (GDNYICHTHQKRVCRFCESSRHLLCEECLQSPEHRAHTELSI) form a B box-type zinc finger. Residues Cys69, His72, Cys91, and His97 each contribute to the Zn(2+) site. Positions 111 to 148 (HYKERLNRRSRKLRKDLGDLQRLKAQEEKMLQALQVDW) form a coiled coil.

Belongs to the TRIM/RBCC family. In terms of assembly, interacts with NEDD8.

The enzyme catalyses S-ubiquitinyl-[E2 ubiquitin-conjugating enzyme]-L-cysteine + [acceptor protein]-L-lysine = [E2 ubiquitin-conjugating enzyme]-L-cysteine + N(6)-ubiquitinyl-[acceptor protein]-L-lysine.. Functionally, E3 ubiquitin-protein ligase that plays a role in the limitation of the innate immune response. Mediates inhibition of the RLR signaling pathway by ubiquitinating RIGI and IFIH1 receptors, leading to their proteasomal degradation. Also promotes the neddylation of IKBKG/NEMO, stabilizing NFKBIA, and thereby inhibiting of NF-kappa-B nuclear translocation and activation. This Rattus norvegicus (Rat) protein is E3 ubiquitin ligase TRIM40 (Trim40).